The chain runs to 268 residues: Agamous-like MADS-box protein AGL15 (268 aa).

An MADS-box domain is found at 1 to 61 (MGRGKIEIKR…GKLFEYSSTG (61 aa)). Residues 80 to 170 (AEEDCAEVDI…RRQVQELRSF (91 aa)) form the K-box domain. Residues 205 to 268 (TDSDTTLQLG…PEAKRQRFSV (64 aa)) form a disordered region. Basic and acidic residues predominate over residues 218–232 (EAHDRRTNEGERESP). The segment covering 233 to 244 (SSDSVTTNTSSE) has biased composition (polar residues).

As to quaternary structure, homodimer. Interacts with SVP, AGL24, AP1, AGL6, AG, AGL1, AGL11, AGL5, AGL16, SOC1 and AGL21. As to expression, expressed at low levels in flowers and siliques. Also present in seedlings. Detected during embryogenesis and accumulates during early seed development (at protein level). Expressed in shoot apices and the base of leaf petioles.

The protein localises to the nucleus. It is found in the cytoplasm. Transcription factor involved in the negative regulation of flowering, probably through the photoperiodic pathway. Acts both as an activator and as a repressor of transcription. Binds DNA in a sequence-specific manner in large CArG motif 5'-CC (A/T)8 GG-3'. Participates probably in the regulation of programs active during the early stages of embryo development. Prevents premature perianth senescence and abscission, fruits development and seed desiccation. Stimulates the expression of at least DTA4, LEC2, FUS3, ABI3, AT4G38680/CSP2 and GRP2B/CSP4. Can enhance somatic embryo development in vitro. In Arabidopsis thaliana (Mouse-ear cress), this protein is Agamous-like MADS-box protein AGL15 (AGL15).